A 371-amino-acid polypeptide reads, in one-letter code: MSNQHALLISNLLPVGSNISTWWNFGSMLLTCLMLQVLTGFFLAIHYTANINLAFSSVVHITRDVPCGWIMQNTHAIGASLFFICIYIHIARGLYYGLYLNKNVWLSGVTLLMTLMATAFFGYVLPWGQMSFWAATVITNLLTAIPYLGVAVTTWLWGGFSINDPTLTRFCALHFILPFIIISLSSIHIILLHNEGSNNPLGTNSDIDKIPFHPYHSYKDFMTTTSMIILLPISLSVSPDLLXDPEKLTKPNPXXXXXXXXXXXXXXXXYGLLRSIPNKLGGTLALLMSILILTLPPFTHTSYIRPMTFRPLSQTLFWTLIATFVMITWTATKPVEPPFITISQLTSIFYFSFFIMNPLLSWTEHKIMMQS.

The next 4 membrane-spanning stretches (helical) occupy residues 25-45 (FGSMLLTCLMLQVLTGFFLAI), 69-90 (WIMQNTHAIGASLFFICIYIHI), 105-125 (WLSGVTLLMTLMATAFFGYVL), and 170-190 (FCALHFILPFIIISLSSIHII). The heme b site is built by His-75 and His-89. His-174 and His-188 together coordinate heme b. A ubiquinone is bound at residue His-193. A run of 4 helical transmembrane segments spans residues 218 to 238 (YKDFMTTTSMIILLPISLSVS), 280 to 300 (LGGTLALLMSILILTLPPFTH), 312 to 332 (LSQTLFWTLIATFVMITWTAT), and 339 to 358 (FITISQLTSIFYFSFFIMNP).

The protein belongs to the cytochrome b family. As to quaternary structure, the cytochrome bc1 complex contains 3 respiratory subunits (MT-CYB, CYC1 and UQCRFS1), 2 core proteins (UQCRC1 and UQCRC2) and probably 6 low-molecular weight proteins. The cofactor is heme b.

Its subcellular location is the mitochondrion inner membrane. Functionally, component of the ubiquinol-cytochrome c reductase complex (complex III or cytochrome b-c1 complex) that is part of the mitochondrial respiratory chain. The b-c1 complex mediates electron transfer from ubiquinol to cytochrome c. Contributes to the generation of a proton gradient across the mitochondrial membrane that is then used for ATP synthesis. The sequence is that of Cytochrome b (MT-CYB) from Micrurus tener microgalbineus (Spotted coral snake).